The sequence spans 620 residues: Hemagglutinin glycoprotein (620 aa).

At 1-37 (MSPQRDRTNAFYKDNPHPKGSRIVINREHLMIDRPYV) the chain is on the intravirion side. The segment at 1 to 154 (MSPQRDRTNA…RIKLDYDQYC (154 aa)) is stalk. The helical; Signal-anchor for type II membrane protein transmembrane segment at 38–58 (LLAILFVMFLSLIGLLAIAGI) threads the bilayer. Residues 59-620 (RLHQAAIHTA…EDGTNRRQSC (562 aa)) lie on the Virion surface side of the membrane. Asn168, Asn187, Asn200, Asn215, and Asn238 each carry an N-linked (GlcNAc...) asparagine; by host glycan. Intrachain disulfides connect Cys188/Cys606, Cys287/Cys300, Cys381/Cys494, Cys386/Cys394, and Cys570/Cys579. An interaction with host NECTIN4 receptor region spans residues 458 to 543 (PMKNLALGVI…VEHAVVYYVY (86 aa)).

This sequence belongs to the paramyxoviruses hemagglutinin-neuraminidase family. Non-sialidase subfamily. In terms of assembly, homodimer; disulfide-linked. Further forms homotetramer (dimer of dimers). Interacts (via C-terminus) with human NECTIN4 (via N-terminus); this interaction allows attachment to the respiratory epithelium and viral entry. Interacts (via C-terminus) with human SLAMF1/CD150 (via N-terminus); this interaction allows attachment and viral entry into the CD150-expressing immune cells.

Its subcellular location is the virion membrane. It localises to the host cell membrane. Attaches the virus to the human SLAMF1/CD150 receptor for entry into host dendritic cells, macrophages, activated memory T cells and naive or memory B cells, thereby explaining the long immunosuppression that follows infection. In the respiratory airways, binds to the NECTIN4 receptor for entry into the host cell. Binding of H protein to the receptor induces a conformational change that allows the F protein to trigger virion/cell membranes fusion. This is Hemagglutinin glycoprotein (H) from Homo sapiens (Human).